A 473-amino-acid polypeptide reads, in one-letter code: Photosystem II CP43 reaction center protein (473 aa).

The propeptide occupies 1–14; it reads MKTLYSLRRFYHVE. Threonine 15 is subject to N-acetylthreonine. The residue at position 15 (threonine 15) is a Phosphothreonine. Transmembrane regions (helical) follow at residues 69–93, 134–155, 178–200, 255–275, and 291–312; these read LFEV…PHLA, LLGP…KDRN, KAFY…RKIT, KPFA…LSYS, and WFNN…ASQA. Position 367 (glutamate 367) interacts with [CaMn4O5] cluster. A helical transmembrane segment spans residues 447-471; it reads RARAAAAGFEKGIDRDFEPVLSMTP.

This sequence belongs to the PsbB/PsbC family. PsbC subfamily. As to quaternary structure, PSII is composed of 1 copy each of membrane proteins PsbA, PsbB, PsbC, PsbD, PsbE, PsbF, PsbH, PsbI, PsbJ, PsbK, PsbL, PsbM, PsbT, PsbX, PsbY, PsbZ, Psb30/Ycf12, at least 3 peripheral proteins of the oxygen-evolving complex and a large number of cofactors. It forms dimeric complexes. The cofactor is Binds multiple chlorophylls and provides some of the ligands for the Ca-4Mn-5O cluster of the oxygen-evolving complex. It may also provide a ligand for a Cl- that is required for oxygen evolution. PSII binds additional chlorophylls, carotenoids and specific lipids..

It localises to the plastid. Its subcellular location is the chloroplast thylakoid membrane. One of the components of the core complex of photosystem II (PSII). It binds chlorophyll and helps catalyze the primary light-induced photochemical processes of PSII. PSII is a light-driven water:plastoquinone oxidoreductase, using light energy to abstract electrons from H(2)O, generating O(2) and a proton gradient subsequently used for ATP formation. This chain is Photosystem II CP43 reaction center protein, found in Pisum sativum (Garden pea).